The following is a 314-amino-acid chain: Mitotic checkpoint protein BUB3.3 (314 aa).

WD repeat units lie at residues 11-50 (PIED…LSLE), 52-90 (NSQA…VDTI), 92-131 (RHDD…SLVF), 134-173 (DAGG…QSYA), 176-215 (VEVP…SEIK), 229-269 (LDGV…RLNE), and 272-311 (RYSN…QVFI).

The protein belongs to the WD repeat BUB3 family. In terms of assembly, part of the mitotic checkpoint complex (MCC).

It is found in the nucleus. The protein resides in the chromosome. It localises to the centromere. The protein localises to the kinetochore. Its subcellular location is the cytoplasm. It is found in the cytoskeleton. The protein resides in the phragmoplast. It localises to the spindle. In terms of biological role, has a dual function in spindle-assembly checkpoint signaling and in promoting the establishment of correct kinetochore-microtubule (K-MT) attachments. Promotes the formation of stable end-on bipolar attachments. Necessary for kinetochore localization of BUB1. The BUB1/BUB3 complex plays a role in the inhibition of anaphase-promoting complex or cyclosome (APC/C) when spindle-assembly checkpoint is activated and inhibits the ubiquitin ligase activity of APC/C by phosphorylating its activator CDC20. This Arabidopsis thaliana (Mouse-ear cress) protein is Mitotic checkpoint protein BUB3.3 (BUB3.3).